Consider the following 344-residue polypeptide: GTPase Obg (344 aa).

An Obg domain is found at 1 to 159; sequence MKFLDLCKVY…RTLWLRLKLI (159 aa). The disordered stretch occupies residues 126 to 146; it reads GNLHFKSSTNQAPRRSNPGQD. The span at 130 to 144 shows a compositional bias: polar residues; the sequence is FKSSTNQAPRRSNPG. One can recognise an OBG-type G domain in the interval 160-327; the sequence is ADVGLLGLPN…VLRKLRGEIS (168 aa). Residues 166-173, 191-195, 212-215, 279-282, and 308-310 contribute to the GTP site; these read GLPNAGKS, FTTLH, DIPG, NKID, and SGV. Positions 173 and 193 each coordinate Mg(2+).

Belongs to the TRAFAC class OBG-HflX-like GTPase superfamily. OBG GTPase family. In terms of assembly, monomer. Mg(2+) serves as cofactor.

Its subcellular location is the cytoplasm. An essential GTPase which binds GTP, GDP and possibly (p)ppGpp with moderate affinity, with high nucleotide exchange rates and a fairly low GTP hydrolysis rate. Plays a role in control of the cell cycle, stress response, ribosome biogenesis and in those bacteria that undergo differentiation, in morphogenesis control. This is GTPase Obg from Roseobacter denitrificans (strain ATCC 33942 / OCh 114) (Erythrobacter sp. (strain OCh 114)).